A 571-amino-acid polypeptide reads, in one-letter code: Cilia- and flagella-associated protein 52 (571 aa).

10 WD repeats span residues glycine 62–arginine 106, leucine 109–glycine 150, leucine 156–tryptophan 195, glutamine 288–isoleucine 327, cysteine 330–asparagine 364, alanine 366–glutamate 405, glutamate 410–methionine 449, leucine 451–glutamate 490, serine 494–valine 533, and glycine 536–serine 571.

Belongs to the CFAP52 family. In terms of assembly, microtubule inner protein component of sperm flagellar doublet microtubules. Interacts with BRCA2. Interacts with the CCT chaperonin complex. Interacts with HSP70. Interacts with AK8. Interacts with CFAP45. Interacts with DNAI1. Interacts with IQDC.

The protein localises to the cytoplasm. The protein resides in the cytoskeleton. It localises to the cilium axoneme. It is found in the flagellum axoneme. Microtubule inner protein (MIP) part of the dynein-decorated doublet microtubules (DMTs) in cilia axoneme. Important for proper ciliary and flagellar beating. May act in cooperation with CFAP45 and axonemal dynein subunit DNAH11. May play a role in cell growth and/or survival. In Macaca fascicularis (Crab-eating macaque), this protein is Cilia- and flagella-associated protein 52.